A 412-amino-acid chain; its full sequence is MQEFLQEAKNSSRIIANLGSAQKNRVLNEMADALIEHSSFILSHNQKDMNDAKLNNLNDALQDRLLLTEKRIQDMAIAIRQIASQQDPLGKILNGWVTKDGLNIQKVSIPIGVIGIIYESRPNVTSDTAALCFKSGNVCVLKGGKEAENSNKAIATILREVLRKNNLPEYAISLLPDSSREGVAKLIKQDKYVDLIVPRGGEALIRFVSENSSIPVIKHDKGICHIFIDQDANITKIFDIVVNAKCQKPSACNSIETLLIHTNIAALILSGLVETLSLHGTILKGCPETLQHINAIPATLEDFDTEYLANVLNIKIVANVDEAITHIQRHGSGHSESILSENYTTINKFLSEVDAACVYANASTRFTDGGEFGLGAEVGISTNKLHSRGPMGIEDLTTFKYKIYGQGQIRKG.

It belongs to the gamma-glutamyl phosphate reductase family.

Its subcellular location is the cytoplasm. The catalysed reaction is L-glutamate 5-semialdehyde + phosphate + NADP(+) = L-glutamyl 5-phosphate + NADPH + H(+). It functions in the pathway amino-acid biosynthesis; L-proline biosynthesis; L-glutamate 5-semialdehyde from L-glutamate: step 2/2. In terms of biological role, catalyzes the NADPH-dependent reduction of L-glutamate 5-phosphate into L-glutamate 5-semialdehyde and phosphate. The product spontaneously undergoes cyclization to form 1-pyrroline-5-carboxylate. This chain is Gamma-glutamyl phosphate reductase, found in Aliarcobacter butzleri (strain RM4018) (Arcobacter butzleri).